Consider the following 131-residue polypeptide: Fluoride-specific ion channel FluC 2 (131 aa).

A run of 4 helical transmembrane segments spans residues 4–24 (IIQG…ARFW), 46–66 (VSGA…HGVF), 71–91 (PWLF…SFAL), and 105–125 (AISN…LGFA). 2 residues coordinate Na(+): Gly-81 and Thr-84.

The protein belongs to the fluoride channel Fluc/FEX (TC 1.A.43) family.

Its subcellular location is the cell inner membrane. The catalysed reaction is fluoride(in) = fluoride(out). Its activity is regulated as follows. Na(+) is not transported, but it plays an essential structural role and its presence is essential for fluoride channel function. Functionally, fluoride-specific ion channel. Important for reducing fluoride concentration in the cell, thus reducing its toxicity. The sequence is that of Fluoride-specific ion channel FluC 2 from Rhodopseudomonas palustris (strain BisB18).